Reading from the N-terminus, the 95-residue chain is Turripeptide OL184 (95 aa).

Post-translationally, contains 5 disulfide bonds. As to expression, expressed by the venom duct.

Its subcellular location is the secreted. Acts as a neurotoxin by inhibiting an ion channel. The sequence is that of Turripeptide OL184 from Iotyrris olangoensis (Sea snail).